We begin with the raw amino-acid sequence, 532 residues long: Exodeoxyribonuclease 7 large subunit (532 aa).

The tract at residues 497–532 is disordered; sequence AITTGEGTPAPETAAAPKKKPAKPASSDPGNQGNLF. The span at 499–512 shows a compositional bias: low complexity; the sequence is TTGEGTPAPETAAA.

This sequence belongs to the XseA family. In terms of assembly, heterooligomer composed of large and small subunits.

The protein localises to the cytoplasm. It catalyses the reaction Exonucleolytic cleavage in either 5'- to 3'- or 3'- to 5'-direction to yield nucleoside 5'-phosphates.. In terms of biological role, bidirectionally degrades single-stranded DNA into large acid-insoluble oligonucleotides, which are then degraded further into small acid-soluble oligonucleotides. This chain is Exodeoxyribonuclease 7 large subunit, found in Agrobacterium fabrum (strain C58 / ATCC 33970) (Agrobacterium tumefaciens (strain C58)).